We begin with the raw amino-acid sequence, 95 residues long: Putative monooxygenase YcnE (95 aa).

The ABM domain occupies 2 to 93; the sequence is IVLQAYIKVK…APLDVVRTEL (92 aa). S24 is modified (phosphoserine).

Belongs to the LsrG family.

Functionally, putative monooxygenase that may contribute to the degradation of aromatic compounds. The polypeptide is Putative monooxygenase YcnE (ycnE) (Bacillus subtilis (strain 168)).